The chain runs to 224 residues: tRNA (guanine-N(7)-)-methyltransferase (224 aa).

3 residues coordinate S-adenosyl-L-methionine: glutamate 52, aspartate 77, and aspartate 126. Aspartate 126 is an active-site residue. Lysine 130 and aspartate 162 together coordinate substrate.

The protein belongs to the class I-like SAM-binding methyltransferase superfamily. TrmB family.

The enzyme catalyses guanosine(46) in tRNA + S-adenosyl-L-methionine = N(7)-methylguanosine(46) in tRNA + S-adenosyl-L-homocysteine. It functions in the pathway tRNA modification; N(7)-methylguanine-tRNA biosynthesis. Its function is as follows. Catalyzes the formation of N(7)-methylguanine at position 46 (m7G46) in tRNA. This Christiangramia forsetii (strain DSM 17595 / CGMCC 1.15422 / KT0803) (Gramella forsetii) protein is tRNA (guanine-N(7)-)-methyltransferase.